Reading from the N-terminus, the 361-residue chain is Protein RecA (361 aa).

An ATP-binding site is contributed by 77-84 (GPESSGKT).

The protein belongs to the RecA family.

It is found in the cytoplasm. In terms of biological role, can catalyze the hydrolysis of ATP in the presence of single-stranded DNA, the ATP-dependent uptake of single-stranded DNA by duplex DNA, and the ATP-dependent hybridization of homologous single-stranded DNAs. It interacts with LexA causing its activation and leading to its autocatalytic cleavage. This Brucella anthropi (strain ATCC 49188 / DSM 6882 / CCUG 24695 / JCM 21032 / LMG 3331 / NBRC 15819 / NCTC 12168 / Alc 37) (Ochrobactrum anthropi) protein is Protein RecA.